A 595-amino-acid chain; its full sequence is ATP-dependent lipid A-core flippase (595 aa).

Residues 1–20 (MSQAYQPDSTKTSAKKSSAV) form a disordered region. Over residues 9-19 (STKTSAKKSSA) the composition is skewed to low complexity. The next 4 helical transmembrane spans lie at 41 to 61 (WWAI…EIWI), 81 to 101 (GLFP…SFLG), 169 to 189 (VIAL…ILFV), and 266 to 286 (INTP…VWLA). An ABC transmembrane type-1 domain is found at 45–326 (LLTITGFAIN…LTDVNQQLQR (282 aa)). An ABC transporter domain is found at 357 to 592 (IKLDNISLVY…HGHYAQMYAR (236 aa)). 390–397 (GRSGAGKS) serves as a coordination point for ATP.

The protein belongs to the ABC transporter superfamily. Lipid exporter (TC 3.A.1.106) family. As to quaternary structure, homodimer.

The protein resides in the cell inner membrane. It carries out the reaction ATP + H2O + lipid A-core oligosaccharideSide 1 = ADP + phosphate + lipid A-core oligosaccharideSide 2.. Involved in lipopolysaccharide (LPS) biosynthesis. Translocates lipid A-core from the inner to the outer leaflet of the inner membrane. Transmembrane domains (TMD) form a pore in the inner membrane and the ATP-binding domain (NBD) is responsible for energy generation. This is ATP-dependent lipid A-core flippase from Psychrobacter arcticus (strain DSM 17307 / VKM B-2377 / 273-4).